A 499-amino-acid chain; its full sequence is MRRYVAALDQGTTSTRCIVFDHGGRVLGLAQREHEQIFPRPGWVEHDAETIWRNTELVLAEAMRTLELSAADIAAVGITNQRETTLVWERATGKPIHHAIVWQDTRTDRLVGELGGAQGPTRYQDRTGLPLSTYFAGPKLRWILDHVPDARERAEAGELCFGTMDSWLLWNLTGAHITDVTNASRTMLMDLRTQRWDEDICADFGVPPAMLPEIRSSSEVYGEITAGPLAGVAVAGILGDQQAATFGQACLSPGEAKNTYGTGNFMLLNTGTTPVFSKHGLLTTVCYRLDDQPAVYALEGSIAVTGSLVQWLRDNLGLISSADEIEPLARSVDDNGGAYIVPAFSGLFAPRWRPDARGVIAGLTRFVTKAHLARAVLESTAFQTREVVDAMRADAESQQLDLELTTLKVDGGMTANDLLMQFQSDILDVPVVRPVVAETTALGAAYAAGLAVGYWSGTDDIRANWAADTTWRPTMSDQDRATHLAAWNKAVERTYNWTA.

Threonine 12 provides a ligand contact to ADP. Residues threonine 12, threonine 13, and serine 14 each contribute to the ATP site. Threonine 12 is a sn-glycerol 3-phosphate binding site. An ADP-binding site is contributed by arginine 16. Arginine 82, glutamate 83, tyrosine 134, and aspartate 240 together coordinate sn-glycerol 3-phosphate. 5 residues coordinate glycerol: arginine 82, glutamate 83, tyrosine 134, aspartate 240, and glutamine 241. The ADP site is built by threonine 262 and glycine 306. The ATP site is built by threonine 262, glycine 306, glutamine 310, and glycine 412. ADP-binding residues include glycine 412 and asparagine 416.

This sequence belongs to the FGGY kinase family.

It catalyses the reaction glycerol + ATP = sn-glycerol 3-phosphate + ADP + H(+). It participates in polyol metabolism; glycerol degradation via glycerol kinase pathway; sn-glycerol 3-phosphate from glycerol: step 1/1. Its activity is regulated as follows. Inhibited by fructose 1,6-bisphosphate (FBP). Its function is as follows. Key enzyme in the regulation of glycerol uptake and metabolism. Catalyzes the phosphorylation of glycerol to yield sn-glycerol 3-phosphate. The sequence is that of Glycerol kinase from Nocardia farcinica (strain IFM 10152).